A 282-amino-acid chain; its full sequence is Ribonuclease P protein subunit p38 (282 aa).

Disordered regions lie at residues 1-21 (MAAAPQAPGRGSVRKTRPLPV) and 61-103 (EDRK…QASG). Ala2 is modified (N-acetylalanine). Phosphoserine is present on Ser12. Over residues 88 to 97 (EDLKKEKPKG) the composition is skewed to basic and acidic residues. 2 positions are modified to phosphoserine: Ser226 and Ser235. A disordered region spans residues 262–282 (KLIPNPNKIRKPPKSKRTASK). The span at 269-282 (KIRKPPKSKRTASK) shows a compositional bias: basic residues.

It belongs to the eukaryotic ribosomal protein eL8 family. Component of nuclear RNase P and RNase MRP ribonucleoproteins. RNase P consists of a catalytic RNA moiety and about 10 protein subunits; POP1, POP4, POP5, POP7, RPP14, RPP21, RPP25, RPP30, RPP38 and RPP40. Within the RNase P complex, POP1, POP7 and RPP25 form the 'finger' subcomplex, POP5, RPP14, RPP40 and homodimeric RPP30 form the 'palm' subcomplex, and RPP21, POP4 and RPP38 form the 'wrist' subcomplex. All subunits of the RNase P complex interact with the catalytic RNA. Several subunits of RNase P are also part of the RNase MRP complex. RNase MRP consists of a catalytic RNA moiety and about 8 protein subunits; POP1, POP7, RPP25, RPP30, RPP38, RPP40 and possibly also POP4 and POP5.

It localises to the nucleus. Its subcellular location is the nucleolus. In terms of biological role, component of ribonuclease P, a ribonucleoprotein complex that generates mature tRNA molecules by cleaving their 5'-ends. Also a component of the MRP ribonuclease complex, which cleaves pre-rRNA sequences. The chain is Ribonuclease P protein subunit p38 (RPP38) from Bos taurus (Bovine).